Here is a 255-residue protein sequence, read N- to C-terminus: tRNA (guanine-N(1)-)-methyltransferase (255 aa).

S-adenosyl-L-methionine-binding positions include G113 and V133–L138.

This sequence belongs to the RNA methyltransferase TrmD family. As to quaternary structure, homodimer.

It is found in the cytoplasm. The enzyme catalyses guanosine(37) in tRNA + S-adenosyl-L-methionine = N(1)-methylguanosine(37) in tRNA + S-adenosyl-L-homocysteine + H(+). Functionally, specifically methylates guanosine-37 in various tRNAs. The sequence is that of tRNA (guanine-N(1)-)-methyltransferase from Francisella philomiragia subsp. philomiragia (strain ATCC 25017 / CCUG 19701 / FSC 153 / O#319-036).